Consider the following 105-residue polypeptide: Large ribosomal subunit protein uL24 (105 aa).

It belongs to the universal ribosomal protein uL24 family. Part of the 50S ribosomal subunit.

One of two assembly initiator proteins, it binds directly to the 5'-end of the 23S rRNA, where it nucleates assembly of the 50S subunit. In terms of biological role, one of the proteins that surrounds the polypeptide exit tunnel on the outside of the subunit. The chain is Large ribosomal subunit protein uL24 from Sphingopyxis alaskensis (strain DSM 13593 / LMG 18877 / RB2256) (Sphingomonas alaskensis).